Here is a 268-residue protein sequence, read N- to C-terminus: Tryptophan synthase alpha chain (268 aa).

Catalysis depends on proton acceptor residues Glu-49 and Asp-60.

The protein belongs to the TrpA family. In terms of assembly, tetramer of two alpha and two beta chains.

It carries out the reaction (1S,2R)-1-C-(indol-3-yl)glycerol 3-phosphate + L-serine = D-glyceraldehyde 3-phosphate + L-tryptophan + H2O. It functions in the pathway amino-acid biosynthesis; L-tryptophan biosynthesis; L-tryptophan from chorismate: step 5/5. Functionally, the alpha subunit is responsible for the aldol cleavage of indoleglycerol phosphate to indole and glyceraldehyde 3-phosphate. This is Tryptophan synthase alpha chain from Mannheimia succiniciproducens (strain KCTC 0769BP / MBEL55E).